The chain runs to 430 residues: Glutamate-1-semialdehyde 2,1-aminomutase (430 aa).

The residue at position 265 (Lys265) is an N6-(pyridoxal phosphate)lysine.

The protein belongs to the class-III pyridoxal-phosphate-dependent aminotransferase family. HemL subfamily. Homodimer. The cofactor is pyridoxal 5'-phosphate.

Its subcellular location is the cytoplasm. The enzyme catalyses (S)-4-amino-5-oxopentanoate = 5-aminolevulinate. Its pathway is porphyrin-containing compound metabolism; protoporphyrin-IX biosynthesis; 5-aminolevulinate from L-glutamyl-tRNA(Glu): step 2/2. The sequence is that of Glutamate-1-semialdehyde 2,1-aminomutase from Shewanella baltica (strain OS195).